Reading from the N-terminus, the 174-residue chain is Disulfide bond formation protein B (174 aa).

Topologically, residues 1-14 (MLHIFYIYSKSRKF) are cytoplasmic. The helical transmembrane segment at 15–31 (WAILICSSISLISIALL) threads the bilayer. The Periplasmic portion of the chain corresponds to 32–49 (NQFFFLLKPCILCIYQRC). A disulfide bridge links cysteine 41 with cysteine 44. A helical membrane pass occupies residues 50-65 (SLFGITIAGLIALISP). The Cytoplasmic segment spans residues 66–72 (KTTLLRL). A helical membrane pass occupies residues 73–90 (FSIFIWLYSAIKGLYFSN). Topologically, residues 91–146 (IHMQTTLHPSSSLTCDLFVSFPNWLPLNKWYPIIFDSKISNCYSYPQYLLYLEISQ) are periplasmic. Cysteine 105 and cysteine 132 are oxidised to a cystine. A helical transmembrane segment spans residues 147–165 (WMLLFFLIYLIIAIFTIIS). Residues 166 to 174 (QCHNLFQKK) lie on the Cytoplasmic side of the membrane.

This sequence belongs to the DsbB family.

Its subcellular location is the cell inner membrane. In terms of biological role, required for disulfide bond formation in some periplasmic proteins. Acts by oxidizing the DsbA protein. The sequence is that of Disulfide bond formation protein B from Blochmanniella floridana.